Reading from the N-terminus, the 620-residue chain is Endoglucanase 6 (620 aa).

The signal sequence occupies residues 1–22 (MEKFAPVAALLLLLLCFPVAFS). The Nucleophile role is filled by Asp78. Active-site residues include His411, Asp463, and Glu472. Residues Asn554 and Asn564 are each glycosylated (N-linked (GlcNAc...) asparagine).

Belongs to the glycosyl hydrolase 9 (cellulase E) family.

The protein resides in the secreted. It catalyses the reaction Endohydrolysis of (1-&gt;4)-beta-D-glucosidic linkages in cellulose, lichenin and cereal beta-D-glucans.. This Arabidopsis thaliana (Mouse-ear cress) protein is Endoglucanase 6.